Reading from the N-terminus, the 744-residue chain is CCR4-NOT transcription complex subunit 10 (744 aa).

Positions 1-16 (MAADKPADQGAEKHEG) are enriched in basic and acidic residues. A disordered region spans residues 1-25 (MAADKPADQGAEKHEGTGQSSGITD). An N-acetylalanine modification is found at Ala2. Residues 74–107 (KSNQTTTDNLRQTLNQLKNQVHSAVEEMDGLDDV) adopt a coiled-coil conformation. The segment covering 183-199 (NNNKNGKNETGNNNNKD) has biased composition (low complexity). Disordered regions lie at residues 183–204 (NNNKNGKNETGNNNNKDGSNHK), 477–521 (QDPK…PPSS), and 602–634 (VSLGISSNEQDQGSDKGENEAMESSGKRAPQCY). The span at 484 to 495 (GAKNSNQLGGNT) shows a compositional bias: polar residues. Positions 496–506 (ESSESSETCSS) are enriched in low complexity. Residues 602–612 (VSLGISSNEQD) are compositionally biased toward polar residues.

Belongs to the CNOT10 family. Component of the CCR4-NOT complex; distinct complexes seem to exist that differ in the participation of probably mutually exclusive catalytic subunits. CNOT10 and CNOT11 form a subcomplex docked to the CNOT1 scaffold.

It is found in the cytoplasm. It localises to the nucleus. Component of the CCR4-NOT complex which is one of the major cellular mRNA deadenylases and is linked to various cellular processes including bulk mRNA degradation, miRNA-mediated repression, translational repression during translational initiation and general transcription regulation. Additional complex functions may be a consequence of its influence on mRNA expression. Is not required for association of CNOT7 to the CCR4-NOT complex. The polypeptide is CCR4-NOT transcription complex subunit 10 (CNOT10) (Homo sapiens (Human)).